A 270-amino-acid chain; its full sequence is Myelin protein zero-like protein 1 (270 aa).

The signal sequence occupies residues Met1–Ile35. Positions Ser36–Arg151 constitute an Ig-like V-type domain. Topologically, residues Ser36–Val162 are extracellular. Residues Asn50 and Asn130 are each glycosylated (N-linked (GlcNAc...) asparagine). A disulfide bridge connects residues Cys58 and Cys135. A helical membrane pass occupies residues Phe163–Ile183. Residues Ser184–Asp270 are Cytoplasmic-facing. Residues Thr201–Asn257 form a disordered region. 4 positions are modified to phosphoserine: Ser204, Ser206, Ser210, and Ser221. Positions Val240–Leu245 match the ITIM motif 1 motif. Tyr242 carries the post-translational modification Phosphotyrosine. Ser261 bears the Phosphoserine mark. An ITIM motif 2 motif is present at residues Val262–Ile267. Tyr264 carries the post-translational modification Phosphotyrosine.

It belongs to the myelin P0 protein family. In terms of assembly, interacts with phosphorylated PTPN11/SHP-2. In terms of processing, phosphorylated on tyrosine residues upon stimulation with pervanadate and concanavalin-A (ConA). Phosphorylation at Tyr-242 and Tyr-264 is required for interaction with PTPN11/SHP-2. Dephosphorylated by PTPN11/SHP-2 (in vitro).

It is found in the membrane. In terms of biological role, cell surface receptor, which is involved in signal transduction processes. Recruits PTPN11/SHP-2 to the cell membrane and is a putative substrate of PTPN11/SHP-2. Is a major receptor for concanavalin-A (ConA) and is involved in cellular signaling induced by ConA, which probably includes Src family tyrosine-protein kinases. Isoform 2 seems to have a dominant negative role; it blocks tyrosine phosphorylation of MPZL1 induced by ConA. Isoform 1, but not isoform 2, may be involved in regulation of integrin-mediated cell motility. This is Myelin protein zero-like protein 1 (Mpzl1) from Mus musculus (Mouse).